The chain runs to 59 residues: Large ribosomal subunit protein bL32 (59 aa).

The protein belongs to the bacterial ribosomal protein bL32 family.

The sequence is that of Large ribosomal subunit protein bL32 from Thermodesulfovibrio yellowstonii (strain ATCC 51303 / DSM 11347 / YP87).